Consider the following 415-residue polypeptide: Dynein assembly factor with WD repeat domains 1 (415 aa).

WD repeat units lie at residues 90–129, 132–172, 175–214, 217–256, 259–298, 301–340, 343–384, and 385–415; these read AHIL…ELHT, GHRN…CFYT, GHTA…EVST, GHFA…KVHV, GHRG…CLAT, GHND…CLCQ, GHKG…QVLE, and GHSD…RIWH.

This sequence belongs to the WD repeat WDR69 family. Expressed in organs bearing motile cilia, including the pronephros, otic vesicles and Kupffer's vesicle.

It is found in the cytoplasm. The protein resides in the cytoskeleton. The protein localises to the flagellum basal body. It localises to the flagellum axoneme. Required for axonemal dynein assembly and ciliary motility in ciliated organs, including Kupffer's vesicle, during embryogenesis. Facilitates the onset of robust cilia motility during development. The chain is Dynein assembly factor with WD repeat domains 1 (daw1) from Danio rerio (Zebrafish).